A 155-amino-acid chain; its full sequence is D-aminoacyl-tRNA deacylase (155 aa).

Positions 137-138 match the Gly-cisPro motif, important for rejection of L-amino acids motif; it reads GP.

It belongs to the DTD family. In terms of assembly, homodimer.

Its subcellular location is the cytoplasm. It catalyses the reaction glycyl-tRNA(Ala) + H2O = tRNA(Ala) + glycine + H(+). The catalysed reaction is a D-aminoacyl-tRNA + H2O = a tRNA + a D-alpha-amino acid + H(+). Its function is as follows. An aminoacyl-tRNA editing enzyme that deacylates mischarged D-aminoacyl-tRNAs. Also deacylates mischarged glycyl-tRNA(Ala), protecting cells against glycine mischarging by AlaRS. Acts via tRNA-based rather than protein-based catalysis; rejects L-amino acids rather than detecting D-amino acids in the active site. By recycling D-aminoacyl-tRNA to D-amino acids and free tRNA molecules, this enzyme counteracts the toxicity associated with the formation of D-aminoacyl-tRNA entities in vivo and helps enforce protein L-homochirality. This chain is D-aminoacyl-tRNA deacylase, found in Roseiflexus sp. (strain RS-1).